Here is a 348-residue protein sequence, read N- to C-terminus: Tocopherol O-methyltransferase, chloroplastic (348 aa).

Residues 1–51 (MKATLAAPSSLTSLPYRTNSSFGSKSSLLFRSPSSSSSVSMTTTRGNVAVA) constitute a chloroplast transit peptide. N-acetylalanine is present on A52. The interval 130–139 (VVDVGCGIGG) is SAM motif I. Residues 193-201 (GKFDLVWSM) form an SAM motif II region. Residues 220–229 (VAAPGGRIII) are SAM motif III.

This sequence belongs to the class I-like SAM-binding methyltransferase superfamily. gTMT family.

The protein localises to the plastid. Its subcellular location is the chloroplast. The enzyme catalyses gamma-tocopherol + S-adenosyl-L-methionine = (+)-alpha-tocopherol + S-adenosyl-L-homocysteine + H(+). It carries out the reaction delta-tocotrienol + S-adenosyl-L-methionine = beta-tocotrienol + S-adenosyl-L-homocysteine + H(+). The catalysed reaction is gamma-tocotrienol + S-adenosyl-L-methionine = alpha-tocotrienol + S-adenosyl-L-homocysteine + H(+). It catalyses the reaction delta-tocopherol + S-adenosyl-L-methionine = beta-tocopherol + S-adenosyl-L-homocysteine + H(+). Its pathway is cofactor biosynthesis; tocopherol biosynthesis. Functionally, involved in the synthesis of tocopherol (vitamin E). Methylates gamma- and delta-tocopherol to form beta- and alpha-tocopherol, respectively. This chain is Tocopherol O-methyltransferase, chloroplastic (VTE4), found in Arabidopsis thaliana (Mouse-ear cress).